A 406-amino-acid polypeptide reads, in one-letter code: Putative colanic acid biosynthesis glycosyltransferase WcaL (406 aa).

It belongs to the glycosyltransferase group 1 family. Glycosyltransferase 4 subfamily.

It functions in the pathway slime biogenesis; slime polysaccharide biosynthesis. In Escherichia coli (strain K12), this protein is Putative colanic acid biosynthesis glycosyltransferase WcaL (wcaL).